The following is a 619-amino-acid chain: Cationic amino acid transporter 3 (619 aa).

At Met1–Asp36 the chain is on the cytoplasmic side. The helical transmembrane segment at Leu37–Val57 threads the bilayer. Over Ala58–Lys61 the chain is Extracellular. The helical transmembrane segment at Ala62–Leu82 threads the bilayer. Residues Cys83–Glu107 lie on the Cytoplasmic side of the membrane. A helical membrane pass occupies residues Leu108–Val128. Over Ala129 to Glu162 the chain is Extracellular. Residues Tyr163–Ala183 form a helical membrane-spanning segment. At Ser184–Lys191 the chain is on the cytoplasmic side. Residues Val192–Gly212 form a helical membrane-spanning segment. The Extracellular portion of the chain corresponds to Asp213 to Asp233. A glycan (N-linked (GlcNAc...) asparagine) is linked at Asn232. A helical transmembrane segment spans residues Thr234–Leu254. Topologically, residues Arg255 to Pro285 are cytoplasmic. The chain crosses the membrane as a helical span at residues Met286–Leu306. Residues Thr307 to Tyr335 lie on the Extracellular side of the membrane. A helical transmembrane segment spans residues Val336–Met356. The Cytoplasmic portion of the chain corresponds to Pro357 to Thr382. Residues Pro383 to Leu403 form a helical membrane-spanning segment. Residues Thr404–Leu406 are Extracellular-facing. A helical membrane pass occupies residues Val407–Ile427. The Cytoplasmic segment spans residues Leu428–Gln475. Residues Ile476–Ala496 form a helical membrane-spanning segment. At Gln497 to Asp506 the chain is on the extracellular side. The chain crosses the membrane as a helical span at residues Leu507–Ile527. The Cytoplasmic portion of the chain corresponds to Trp528–Lys540. A helical membrane pass occupies residues Val541–Gln561. Residues Met562–Arg569 are Extracellular-facing. A helical membrane pass occupies residues Phe570–Leu590. Topologically, residues Glu591–Val619 are cytoplasmic. Position 606 is a phosphothreonine (Thr606). At Ser618 the chain carries Phosphoserine.

The protein belongs to the amino acid-polyamine-organocation (APC) superfamily. Cationic amino acid transporter (CAT) (TC 2.A.3.3) family. In terms of processing, N-glycosylated. As to expression, highly expressed in thymus, uterus and testis. Detected at lower levels in brain, mammary gland, prostate, salivary gland and fetal spleen. In brain, highest expression in thalamus, hippocampus and amygdala.

Its subcellular location is the cell membrane. The enzyme catalyses L-arginine(in) = L-arginine(out). It catalyses the reaction L-lysine(in) = L-lysine(out). It carries out the reaction L-ornithine(in) = L-ornithine(out). Its function is as follows. Uniporter that mediates the uptake of cationic L-amino acids such as L-arginine, L-lysine and L-ornithine. The transport is sodium ions- and pH-independent, moderately trans-stimulated and is mediated by passive diffusion. In Homo sapiens (Human), this protein is Cationic amino acid transporter 3.